Here is a 105-residue protein sequence, read N- to C-terminus: MKVIFSVAVLVLASSVWTSLAVDFILPMNFHMTGELLQKTKALCIKNIQLCWILSYFKVSEPICGSNQVTYEGECHLCSGILYEDRTVIKVHDGPCEHSSDESEH.

Residues 1-21 (MKVIFSVAVLVLASSVWTSLA) form the signal peptide. 3 disulfide bridges follow: Cys44–Cys78, Cys51–Cys75, and Cys64–Cys96. Positions 44-98 (CIKNIQLCWILSYFKVSEPICGSNQVTYEGECHLCSGILYEDRTVIKVHDGPCEH) constitute a Kazal-like domain.

In terms of tissue distribution, expressed in epydiymis, in the cauda, corpus and caput.

It localises to the secreted. In terms of biological role, probable serine protease inhibitor. This Mus musculus (Mouse) protein is Serine protease inhibitor Kazal-type 8 (Spink8).